Reading from the N-terminus, the 194-residue chain is Inosine triphosphate pyrophosphatase (194 aa).

ITP is bound at residue 10–15; it reads TSSKKK. Mg(2+) is bound at residue E37. ITP-binding positions include K49, 65-66, K82, 142-145, K166, and 171-172; these read DV, FGWD, and HR.

Belongs to the HAM1 NTPase family. In terms of assembly, homodimer. It depends on Mg(2+) as a cofactor. Requires Mn(2+) as cofactor.

The protein localises to the cytoplasm. It catalyses the reaction ITP + H2O = IMP + diphosphate + H(+). It carries out the reaction dITP + H2O = dIMP + diphosphate + H(+). The catalysed reaction is XTP + H2O = XMP + diphosphate + H(+). Functionally, pyrophosphatase that hydrolyzes non-canonical purine nucleotides such as inosine triphosphate (ITP), deoxyinosine triphosphate (dITP) or xanthosine 5'-triphosphate (XTP) to their respective monophosphate derivatives. The enzyme does not distinguish between the deoxy- and ribose forms. Probably excludes non-canonical purines from RNA and DNA precursor pools, thus preventing their incorporation into RNA and DNA and avoiding chromosomal lesions. In Giardia intestinalis (strain ATCC 50803 / WB clone C6) (Giardia lamblia), this protein is Inosine triphosphate pyrophosphatase.